Here is a 286-residue protein sequence, read N- to C-terminus: Beta-lactamase SHV-13 (286 aa).

Positions 1–21 are cleaved as a signal peptide; the sequence is MRYIRLCIISLLATLPLAVHA. Catalysis depends on Ser66, which acts as the Acyl-ester intermediate. An intrachain disulfide couples Cys73 to Cys119. The active-site Proton acceptor is the Glu164. 230–232 contacts substrate; the sequence is KTG.

The protein belongs to the class-A beta-lactamase family.

The enzyme catalyses a beta-lactam + H2O = a substituted beta-amino acid. Its activity is regulated as follows. Inhibited 16-fold better by the beta-lactamase inhibitor clavulanic acid than by tazobactam. In terms of biological role, broad spectrum beta-lactamase which hydrolyzes penicillins, as well as cephalosporins except cephamycins. Also hydrolyzes aztreonam, but not imipenem. Confers highly resistance to ceftazidime, cefotaxime, aztreonam and piperacillin. The protein is Beta-lactamase SHV-13 (bla) of Klebsiella pneumoniae.